The sequence spans 723 residues: MSKRLTPIHLPNSLNYPIEIASCLVPQGSYVKKGTPLLLYRFFTKVKEDQEDGSEVYVDREFVEQFECPVEGELVEWAVKKEESIENFSKIVAKLHEPCTHEVNYGGLCAICGKNITSQDYMGYSDMARANISMTHNTGDLTVSLEEASRLESENVKRLRQEKRLSLIVDLDQTIIHATVDPTVGEWMSDPGNVNYDVLRDVRSFNLQEGPSGYTSCYYIKFRPGLAQFLQKISELYELHIYTMGTKAYAKEVAKIIDPTGKLFQDRVLSRDDSGSLAQKSLRRLFPCDTSMVVVIDDRGDVWDWNPNLIKVVPYEFFVGIGDINSNFLAKSTPLPEQEQLIPLEIPKDEPDSVDEINEENEETPEYDSSNSSYAQDSSTIPEKTLLKDTFLQNREALEEQNKERVTALELQKSERPLAKQQNALLEDEGKPTPSHTLLHNRDHELERLEKVLKDIHAVYYEEENDISSRSGNHKHANVGLIIPKMKQKVLKGCRLLFSGVIPLGVDVLSSDIAKWAMSFGAEVVLDFSVPPTHLIAAKIRTEKVKKAVSMGNIKVVKLNWLTESLSQWKRLPESDYLLYPSYDLPDRNLSEHSYSSSSDDEQRISELNDRELDEIDWQAADQDVENALKDLSDDNDFDTGSISASQSQPEALEVNTPIKRKADLIQPSYNYDGEKRRKENDNHEGYDLLPNSSTKGEESAENENELDDLADIMEAELSKDTA.

One can recognise an FCP1 homology domain in the interval 160-341; it reads RQEKRLSLIV…STPLPEQEQL (182 aa). Residues D170 and D172 contribute to the active site. Residues 345–380 are disordered; that stretch reads EIPKDEPDSVDEINEENEETPEYDSSNSSYAQDSST. The segment covering 352–366 has biased composition (acidic residues); the sequence is DSVDEINEENEETPE. Positions 367 to 379 are enriched in low complexity; that stretch reads YDSSNSSYAQDSS. In terms of domain architecture, BRCT spans 486–579; that stretch reads MKQKVLKGCR…KRLPESDYLL (94 aa). Residues 631–723 form a disordered region; the sequence is DLSDDNDFDT…MEAELSKDTA (93 aa). A compositionally biased stretch (polar residues) spans 639-650; it reads DTGSISASQSQP. Residues 673 to 687 are compositionally biased toward basic and acidic residues; the sequence is DGEKRRKENDNHEGY. The span at 700-715 shows a compositional bias: acidic residues; the sequence is SAENENELDDLADIME.

As to quaternary structure, monomer. Mg(2+) serves as cofactor. Requires Mn(2+) as cofactor. The cofactor is Co(2+).

The protein localises to the nucleus. It carries out the reaction O-phospho-L-seryl-[protein] + H2O = L-seryl-[protein] + phosphate. The catalysed reaction is O-phospho-L-threonyl-[protein] + H2O = L-threonyl-[protein] + phosphate. Processively dephosphorylates 'Ser-2' and 'Ser-5' of the heptad repeats YSPTSPS in the C-terminal domain of the largest RNA polymerase II subunit. This promotes the activity of RNA polymerase II. The protein is RNA polymerase II subunit A C-terminal domain phosphatase (fcp1) of Schizosaccharomyces pombe (strain 972 / ATCC 24843) (Fission yeast).